The chain runs to 272 residues: HMP-PP phosphatase (272 aa).

The Nucleophile role is filled by Asp8. Positions 8, 10, and 212 each coordinate Mg(2+).

The protein belongs to the HAD-like hydrolase superfamily. Cof family. Requires Mg(2+) as cofactor.

The catalysed reaction is 4-amino-2-methyl-5-(diphosphooxymethyl)pyrimidine + H2O = 4-amino-2-methyl-5-(phosphooxymethyl)pyrimidine + phosphate + H(+). In terms of biological role, catalyzes the hydrolysis of 4-amino-2-methyl-5-hydroxymethylpyrimidine pyrophosphate (HMP-PP) to 4-amino-2-methyl-5-hydroxymethylpyrimidine phosphate (HMP-P). The protein is HMP-PP phosphatase of Salmonella choleraesuis (strain SC-B67).